The sequence spans 236 residues: Pyridoxine 5'-phosphate synthase (236 aa).

Asn-7 contributes to the 3-amino-2-oxopropyl phosphate binding site. A 1-deoxy-D-xylulose 5-phosphate-binding site is contributed by 9 to 10 (DH). Arg-18 lines the 3-amino-2-oxopropyl phosphate pocket. His-43 functions as the Proton acceptor in the catalytic mechanism. Arg-45 and His-50 together coordinate 1-deoxy-D-xylulose 5-phosphate. Glu-69 acts as the Proton acceptor in catalysis. 1-deoxy-D-xylulose 5-phosphate is bound at residue Thr-99. The Proton donor role is filled by His-190. 3-amino-2-oxopropyl phosphate-binding positions include Gly-191 and 212–213 (GH).

This sequence belongs to the PNP synthase family. Homooctamer; tetramer of dimers.

It localises to the cytoplasm. It catalyses the reaction 3-amino-2-oxopropyl phosphate + 1-deoxy-D-xylulose 5-phosphate = pyridoxine 5'-phosphate + phosphate + 2 H2O + H(+). It functions in the pathway cofactor biosynthesis; pyridoxine 5'-phosphate biosynthesis; pyridoxine 5'-phosphate from D-erythrose 4-phosphate: step 5/5. In terms of biological role, catalyzes the complicated ring closure reaction between the two acyclic compounds 1-deoxy-D-xylulose-5-phosphate (DXP) and 3-amino-2-oxopropyl phosphate (1-amino-acetone-3-phosphate or AAP) to form pyridoxine 5'-phosphate (PNP) and inorganic phosphate. This chain is Pyridoxine 5'-phosphate synthase, found in Desulfosudis oleivorans (strain DSM 6200 / JCM 39069 / Hxd3) (Desulfococcus oleovorans).